A 392-amino-acid polypeptide reads, in one-letter code: Formate-dependent phosphoribosylglycinamide formyltransferase (392 aa).

Residues 20 to 21 (EL) and E80 contribute to the N(1)-(5-phospho-beta-D-ribosyl)glycinamide site. ATP contacts are provided by residues R112, K153, 158-163 (SSGKGQ), 193-196 (EGFV), and E201. One can recognise an ATP-grasp domain in the interval 117–306 (RLAAETLGLP…EFALHVRAIL (190 aa)). Mg(2+) contacts are provided by E265 and E277. N(1)-(5-phospho-beta-D-ribosyl)glycinamide is bound by residues D284, K355, and 362-363 (RR).

It belongs to the PurK/PurT family. Homodimer.

The enzyme catalyses N(1)-(5-phospho-beta-D-ribosyl)glycinamide + formate + ATP = N(2)-formyl-N(1)-(5-phospho-beta-D-ribosyl)glycinamide + ADP + phosphate + H(+). It participates in purine metabolism; IMP biosynthesis via de novo pathway; N(2)-formyl-N(1)-(5-phospho-D-ribosyl)glycinamide from N(1)-(5-phospho-D-ribosyl)glycinamide (formate route): step 1/1. Involved in the de novo purine biosynthesis. Catalyzes the transfer of formate to 5-phospho-ribosyl-glycinamide (GAR), producing 5-phospho-ribosyl-N-formylglycinamide (FGAR). Formate is provided by PurU via hydrolysis of 10-formyl-tetrahydrofolate. The protein is Formate-dependent phosphoribosylglycinamide formyltransferase of Aeromonas hydrophila subsp. hydrophila (strain ATCC 7966 / DSM 30187 / BCRC 13018 / CCUG 14551 / JCM 1027 / KCTC 2358 / NCIMB 9240 / NCTC 8049).